The chain runs to 243 residues: ATP synthase subunit a, chloroplastic (243 aa).

5 helical membrane-spanning segments follow: residues 32 to 52 (AQVL…ALIA), 91 to 111 (IPFV…GALI), 130 to 150 (INTT…AGLN), 195 to 215 (LVVA…MMFL), and 216 to 236 (GLFT…AYIG).

It belongs to the ATPase A chain family. In terms of assembly, F-type ATPases have 2 components, CF(1) - the catalytic core - and CF(0) - the membrane proton channel. CF(1) has five subunits: alpha(3), beta(3), gamma(1), delta(1), epsilon(1). CF(0) has four main subunits: a, b, b' and c.

The protein resides in the plastid. The protein localises to the chloroplast thylakoid membrane. In terms of biological role, key component of the proton channel; it plays a direct role in the translocation of protons across the membrane. This is ATP synthase subunit a, chloroplastic from Chaetosphaeridium globosum (Charophycean green alga).